A 300-amino-acid polypeptide reads, in one-letter code: uncharacterized protein (300 aa).

Disordered stretches follow at residues 167-186 (DVFLNSSPPPHTAQVSHHEH) and 224-244 (ADGSSLETSSMSSPRPEDASH). Over residues 224 to 236 (ADGSSLETSSMSS) the composition is skewed to polar residues.

This is an uncharacterized protein from Rattus norvegicus (Rat).